Reading from the N-terminus, the 409-residue chain is MASSSAPDENEFQFGCPPAPCQDPSEPRVLCCTACLSENLRDDEDRICPKCRADNLHPVSPGSPLTQEKVHSDVAEAEIMCPFAGVGCSFKGSPQSMQEHEATSQSSHLYLLLAVLKEWKSSPGSNLGSAPMALERNLSELQLQAAVEATGDLEVDCYRAPCCESQEELALQHLVKEKLLAQLEEKLRVFANIVAVLNKEVEASHLALAASIHQSQLDREHILSLEQRVVELQQTLAQKDQVLGKLEHSLRLMEEASFDGTFLWKITNVTKRCHESVCGRTVSLFSPAFYTAKYGYKLCLRLYLNGDGSGKKTHLSLFIVIMRGEYDALLPWPFRNKVTFMLLDQNNREHAIDAFRPDLSSASFQRPQSETNVASGCPLFFPLSKLQSPKHAYVKDDTMFLKCIVDTSA.

Phosphoserine is present on S139. Residues 167–256 are a coiled coil; sequence EELALQHLVK…EHSLRLMEEA (90 aa). Residues K178 and K186 each participate in a glycyl lysine isopeptide (Lys-Gly) (interchain with G-Cter in ubiquitin) cross-link. Residues 259–405 enclose the MATH domain; the sequence is DGTFLWKITN…DDTMFLKCIV (147 aa).

Homotrimer. Heterotrimer with TRAF2. Interacts with TNFRSF1A/TNFR1, TNFRSF1B/TNFR2, TNFRSF4, TNFRSF5/CD40, TNFRSF8/CD30, TNFRSF9/CD137, TNFRSF11A/RANK, TNFRSF13C, TNFRSF18/AITR, TNFRSF17/BCMA, TNFRSF19/TROY, TNFRSF19L/RELT, XEDAR, EDAR, Epstein-Barr virus BNFL1/LMP-1, TANK/ITRAF, TRAIP and RIPK2. Interacts with BIRC2 and BIRC3 N-terminus; a single BIRC2 or BIRC3 molecule interacts with a heterotrimer formed by TRAF1 and TRAF2. Interacts with MAP3K14. Interacts with NFATC2IP, TRAFD1 and with HIVEP3. Interacts with GPS2. Post-translationally, polyubiquitinated by BIRC2 and/or BIRC3, leading to its subsequent proteasomal degradation. Ubiquitinated by the SCF(FBXL2) complex, leading to its degradation by the proteasome.

It is found in the cytoplasm. Functionally, adapter molecule that regulates the activation of NF-kappa-B and JNK. Plays a role in the regulation of cell survival and apoptosis. The heterotrimer formed by TRAF1 and TRAF2 is part of a E3 ubiquitin-protein ligase complex that promotes ubiquitination of target proteins, such as MAP3K14. The TRAF1/TRAF2 complex recruits the antiapoptotic E3 protein-ubiquitin ligases BIRC2 and BIRC3 to TNFRSF1B/TNFR2. The sequence is that of TNF receptor-associated factor 1 (Traf1) from Mus musculus (Mouse).